Consider the following 547-residue polypeptide: Chaperonin GroEL (547 aa).

ATP contacts are provided by residues 30 to 33 (TLGP), lysine 51, 87 to 91 (DGTTT), glycine 415, 479 to 481 (NAA), and aspartate 495. The segment at 524–547 (APKKDEPTPPAAGGGMGGMGGMDF) is disordered. The span at 535–547 (AGGGMGGMGGMDF) shows a compositional bias: gly residues.

This sequence belongs to the chaperonin (HSP60) family. Forms a cylinder of 14 subunits composed of two heptameric rings stacked back-to-back. Interacts with the co-chaperonin GroES.

It is found in the cytoplasm. The catalysed reaction is ATP + H2O + a folded polypeptide = ADP + phosphate + an unfolded polypeptide.. Its function is as follows. Together with its co-chaperonin GroES, plays an essential role in assisting protein folding. The GroEL-GroES system forms a nano-cage that allows encapsulation of the non-native substrate proteins and provides a physical environment optimized to promote and accelerate protein folding. In Xylella fastidiosa (strain 9a5c), this protein is Chaperonin GroEL.